A 332-amino-acid polypeptide reads, in one-letter code: Probable xyloglucan endotransglucosylase/hydrolase protein 28 (332 aa).

A signal peptide spans Met-1–Ala-22. Residues Leu-23–Phe-223 form the GH16 domain. The active-site Nucleophile is the Glu-108. The active-site Proton donor is the Glu-112. Residues Glu-112 and Gln-125 to Asn-127 contribute to the xyloglucan site. Asn-131 carries an N-linked (GlcNAc...) asparagine glycan. Xyloglucan-binding positions include His-135–Glu-139, Lys-202–Trp-203, Gly-207, and Arg-282. Cys-277 and Cys-290 are disulfide-bonded. The segment covering His-313–Leu-326 has biased composition (basic residues). A disordered region spans residues His-313–Ile-332.

This sequence belongs to the glycosyl hydrolase 16 family. XTH group 3 subfamily. Contains at least one intrachain disulfide bond essential for its enzymatic activity. In terms of tissue distribution, expressed in 7 day old seedlings, roots, rosette leaves, internodes between nodes bearing axillary shoots, nodes bearing flowers, flower buds and siliques.

It localises to the secreted. The protein resides in the cell wall. It is found in the extracellular space. The protein localises to the apoplast. It catalyses the reaction breaks a beta-(1-&gt;4) bond in the backbone of a xyloglucan and transfers the xyloglucanyl segment on to O-4 of the non-reducing terminal glucose residue of an acceptor, which can be a xyloglucan or an oligosaccharide of xyloglucan.. In terms of biological role, catalyzes xyloglucan endohydrolysis (XEH) and/or endotransglycosylation (XET). Cleaves and religates xyloglucan polymers, an essential constituent of the primary cell wall, and thereby participates in cell wall construction of growing tissues. This Arabidopsis thaliana (Mouse-ear cress) protein is Probable xyloglucan endotransglucosylase/hydrolase protein 28 (XTH28).